Reading from the N-terminus, the 158-residue chain is Endoribonuclease YbeY (158 aa).

Zn(2+)-binding residues include H124, H128, and H134.

It belongs to the endoribonuclease YbeY family. Requires Zn(2+) as cofactor.

The protein resides in the cytoplasm. Single strand-specific metallo-endoribonuclease involved in late-stage 70S ribosome quality control and in maturation of the 3' terminus of the 16S rRNA. The protein is Endoribonuclease YbeY of Caldicellulosiruptor bescii (strain ATCC BAA-1888 / DSM 6725 / KCTC 15123 / Z-1320) (Anaerocellum thermophilum).